The primary structure comprises 451 residues: UDP-N-acetyl-alpha-D-muramoyl-L-alanyl-L-glutamate epimerase (451 aa).

It belongs to the MurL family.

The catalysed reaction is UDP-N-acetyl-alpha-D-muramoyl-L-alanyl-L-glutamate + ATP + H2O = UDP-N-acetyl-alpha-D-muramoyl-L-alanyl-D-glutamate + AMP + diphosphate + H(+). The protein operates within cell wall biogenesis; peptidoglycan biosynthesis. In terms of biological role, cell wall formation. Catalyzes epimerization of the terminal L-glutamate in UDP-N-acetyl-alpha-D-muramoyl-L-alanyl-L-glutamate. This is UDP-N-acetyl-alpha-D-muramoyl-L-alanyl-L-glutamate epimerase from Xanthomonas oryzae pv. oryzae (strain MAFF 311018).